The following is a 150-amino-acid chain: Ribosome maturation factor RimP (150 aa).

It belongs to the RimP family.

It is found in the cytoplasm. Functionally, required for maturation of 30S ribosomal subunits. This is Ribosome maturation factor RimP from Thermotoga petrophila (strain ATCC BAA-488 / DSM 13995 / JCM 10881 / RKU-1).